We begin with the raw amino-acid sequence, 845 residues long: ABC transporter A family member 9 (845 aa).

Helical transmembrane passes span 33 to 53, 192 to 212, 235 to 255, 292 to 312, 318 to 338, 347 to 367, and 417 to 437; these read CVQI…NFWV, AFVA…FLGG, IASL…MPLF, IYFI…FAVF, FAMF…SFFL, AASI…SILS, and SKII…ALYL. The ABC transporter domain maps to 531–762; it reads VIIEGLTKHY…FGDGYSVRIN (232 aa). 565–572 is a binding site for ATP; sequence GANGAGKT.

Belongs to the ABC transporter superfamily. ABCA family.

The protein localises to the membrane. The polypeptide is ABC transporter A family member 9 (abcA9) (Dictyostelium discoideum (Social amoeba)).